Here is a 690-residue protein sequence, read N- to C-terminus: Glycine--tRNA ligase beta subunit (690 aa).

It belongs to the class-II aminoacyl-tRNA synthetase family. As to quaternary structure, tetramer of two alpha and two beta subunits.

It localises to the cytoplasm. The enzyme catalyses tRNA(Gly) + glycine + ATP = glycyl-tRNA(Gly) + AMP + diphosphate. The sequence is that of Glycine--tRNA ligase beta subunit from Buchnera aphidicola subsp. Acyrthosiphon pisum (strain 5A).